The sequence spans 170 residues: Dual-action ribosomal maturation protein DarP (170 aa).

Belongs to the DarP family.

It is found in the cytoplasm. Member of a network of 50S ribosomal subunit biogenesis factors which assembles along the 30S-50S interface, preventing incorrect 23S rRNA structures from forming. Promotes peptidyl transferase center (PTC) maturation. The polypeptide is Dual-action ribosomal maturation protein DarP (Neisseria meningitidis serogroup A / serotype 4A (strain DSM 15465 / Z2491)).